The primary structure comprises 395 residues: Cystathionine beta-lyase (395 aa).

Lys210 carries the N6-(pyridoxal phosphate)lysine modification.

The protein belongs to the trans-sulfuration enzymes family. As to quaternary structure, homotetramer. Pyridoxal 5'-phosphate is required as a cofactor.

The protein resides in the cytoplasm. It catalyses the reaction L,L-cystathionine + H2O = L-homocysteine + pyruvate + NH4(+). It carries out the reaction an S-substituted L-cysteine + H2O = a thiol + pyruvate + NH4(+). The protein operates within amino-acid biosynthesis; L-methionine biosynthesis via de novo pathway; L-homocysteine from L-cystathionine: step 1/1. In terms of biological role, catalyzes the cleavage of cystathionine to homocysteine, pyruvate and ammonia during methionine biosynthesis. The polypeptide is Cystathionine beta-lyase (metC) (Salmonella typhimurium (strain LT2 / SGSC1412 / ATCC 700720)).